Here is a 435-residue protein sequence, read N- to C-terminus: Angio-associated migratory cell protein (435 aa).

The interval 1–65 (MESESESGAA…EEEEEGNEEG (65 aa)) is disordered. Ser20 carries the phosphoserine modification. Positions 39–63 (DPDDLAQEMEDVDFEEEEEEEEGNE) are enriched in acidic residues. WD repeat units follow at residues 90–130 (LHSA…LLFE), 133–172 (GHKD…EVWS), 174–213 (EAGD…KTFQ), 215–255 (PNCP…HVLK), 259–300 (GHQG…GVFR), 316–355 (SESN…LRHQ), 357–396 (QHQS…LLTD), and 399–434 (GHTA…QRPD).

Its subcellular location is the cell membrane. The protein resides in the cytoplasm. Plays a role in angiogenesis and cell migration. In smooth muscle cell migration, may act through the RhoA pathway. The protein is Angio-associated migratory cell protein (AAMP) of Canis lupus familiaris (Dog).